Consider the following 207-residue polypeptide: Ribonuclease HII (207 aa).

An RNase H type-2 domain is found at 17 to 207 (RIVAGVDEVG…SFKPLAAFVD (191 aa)). Residues Asp-23, Glu-24, and Asp-120 each contribute to the a divalent metal cation site.

It belongs to the RNase HII family. The cofactor is Mn(2+). Mg(2+) serves as cofactor.

It is found in the cytoplasm. The catalysed reaction is Endonucleolytic cleavage to 5'-phosphomonoester.. Endonuclease that specifically degrades the RNA of RNA-DNA hybrids. This is Ribonuclease HII from Herpetosiphon aurantiacus (strain ATCC 23779 / DSM 785 / 114-95).